The primary structure comprises 332 residues: DNA-directed RNA polymerase subunit alpha (332 aa).

The segment at 1-231 (MVREKVTVST…DLFIPFLHME (231 aa)) is alpha N-terminal domain (alpha-NTD). Positions 262 to 332 (LSLESLFIDQ…FALDLPKNLN (71 aa)) are alpha C-terminal domain (alpha-CTD).

The protein belongs to the RNA polymerase alpha chain family. In plastids the minimal PEP RNA polymerase catalytic core is composed of four subunits: alpha, beta, beta', and beta''. When a (nuclear-encoded) sigma factor is associated with the core the holoenzyme is formed, which can initiate transcription.

Its subcellular location is the plastid. The enzyme catalyses RNA(n) + a ribonucleoside 5'-triphosphate = RNA(n+1) + diphosphate. Its function is as follows. DNA-dependent RNA polymerase catalyzes the transcription of DNA into RNA using the four ribonucleoside triphosphates as substrates. This Cuscuta japonica (Japanese dodder) protein is DNA-directed RNA polymerase subunit alpha.